Reading from the N-terminus, the 461-residue chain is Trigger factor (461 aa).

Residues 166 to 245 (GDFANIDLTA…VNSVKAEELP (80 aa)) enclose the PPIase FKBP-type domain.

This sequence belongs to the FKBP-type PPIase family. Tig subfamily.

It localises to the cytoplasm. It catalyses the reaction [protein]-peptidylproline (omega=180) = [protein]-peptidylproline (omega=0). Involved in protein export. Acts as a chaperone by maintaining the newly synthesized protein in an open conformation. Functions as a peptidyl-prolyl cis-trans isomerase. The polypeptide is Trigger factor (Bifidobacterium animalis subsp. lactis (strain AD011)).